A 385-amino-acid polypeptide reads, in one-letter code: Cytochrome b (385 aa).

Helical transmembrane passes span 34–54, 78–99, 114–134, and 179–199; these read FGSILGLCLFLQIATGLILTM, WFIRNFHITGASLFFSCMFIHI, WYSGVILFICAMVTAFFGYVL, and FLVLHFLVPFLMIAVSLTHLL. The heme b site is built by His84 and His98. 2 residues coordinate heme b: His183 and His197. Residue His202 participates in a ubiquinone binding. Transmembrane regions (helical) follow at residues 227 to 247, 289 to 309, 321 to 341, and 348 to 368; these read FKDILGFLITLSLIFLGSTLF, LMGVFALIMSLSVLLFMPFLI, FMQFTFWLMISNFILLSWLGA, and YTIMSQVTSFLYFFIFLFLFP.

Belongs to the cytochrome b family. The cytochrome bc1 complex contains 3 respiratory subunits (MT-CYB, CYC1 and UQCRFS1), 2 core proteins (UQCRC1 and UQCRC2) and probably 6 low-molecular weight proteins. Requires heme b as cofactor.

It localises to the mitochondrion inner membrane. Component of the ubiquinol-cytochrome c reductase complex (complex III or cytochrome b-c1 complex) that is part of the mitochondrial respiratory chain. The b-c1 complex mediates electron transfer from ubiquinol to cytochrome c. Contributes to the generation of a proton gradient across the mitochondrial membrane that is then used for ATP synthesis. In Myxine glutinosa (Atlantic hagfish), this protein is Cytochrome b (MT-CYB).